The following is a 51-amino-acid chain: Suberization-associated anionic peroxidase 1 (51 aa).

A heme-binding site is contributed by His-30. Thr-31 is a binding site for Ca(2+).

This sequence belongs to the peroxidase family. Classical plant (class III) peroxidase subfamily. It depends on heme b as a cofactor. Requires Ca(2+) as cofactor.

Its subcellular location is the secreted. It carries out the reaction 2 a phenolic donor + H2O2 = 2 a phenolic radical donor + 2 H2O. In terms of biological role, removal of H(2)O(2), oxidation of toxic reductants, biosynthesis and degradation of lignin, suberization, auxin catabolism, response to environmental stresses such as wounding, pathogen attack and oxidative stress. These functions might be dependent on each isozyme/isoform in each plant tissue. Suggested to catalyze the deposition of the aromatic residues of suberin on the cell wall and thus play a role in cell-suberization. This is Suberization-associated anionic peroxidase 1 from Capsicum annuum (Capsicum pepper).